A 465-amino-acid chain; its full sequence is Pancreatic triacylglycerol lipase (465 aa).

The first 16 residues, 1–16 (MLPLWTLSLLLGAVAG), serve as a signal peptide directing secretion. 2 disulfide bridges follow: Cys20/Cys26 and Cys107/Cys118. Ser169 serves as the catalytic Nucleophile. N-linked (GlcNAc...) asparagine glycosylation occurs at Asn183. The Charge relay system role is filled by Asp193. Residues Glu204, Arg207, Asp209, and Asp212 each coordinate Ca(2+). The cysteines at positions 254 and 278 are disulfide-linked. The Charge relay system role is filled by His280. 3 disulfide bridges follow: Cys302-Cys313, Cys316-Cys321, and Cys449-Cys465. Positions 355 to 465 (WRYKVSVTLS…EEVLLTLTPC (111 aa)) constitute a PLAT domain.

This sequence belongs to the AB hydrolase superfamily. Lipase family. In terms of assembly, forms a 1:1 stoichiometric complex with (pro)colipase/CLPS.

The protein localises to the secreted. The catalysed reaction is a triacylglycerol + H2O = a diacylglycerol + a fatty acid + H(+). The enzyme catalyses 1,2,3-tributanoylglycerol + H2O = dibutanoylglycerol + butanoate + H(+). It carries out the reaction 1,2,3-tri-(9Z-octadecenoyl)-glycerol + H2O = di-(9Z)-octadecenoylglycerol + (9Z)-octadecenoate + H(+). It catalyses the reaction all-trans-retinyl hexadecanoate + H2O = all-trans-retinol + hexadecanoate + H(+). The catalysed reaction is 1,2-di-(9Z-octadecenoyl)-glycerol + H2O = (9Z-octadecenoyl)-glycerol + (9Z)-octadecenoate + H(+). Inhibited by bile salts, is reactivated by (pro)colipase/CLPS. In terms of biological role, plays an important role in fat metabolism. It preferentially splits the esters of long-chain fatty acids at positions 1 and 3, producing mainly 2-monoacylglycerol and free fatty acids, and shows considerably higher activity against insoluble emulsified substrates than against soluble ones. This chain is Pancreatic triacylglycerol lipase, found in Homo sapiens (Human).